A 418-amino-acid polypeptide reads, in one-letter code: MSGLDIYPHDPSSSSSTSSIDLSNEAFFSTGGLFLEPPGVSSSFFDSISSKCSDSEPLHFPGYWRNKTRLRSGKNFMFLSVSLSKDRSEQQCKKALAQNDEIPGKDNRKRSVIGGVRRRGTMNTRKHLWAGAVAAMVSKTFLAPLERLKLEYTVRGEQRNLLVVAKSIATTQGLTGFWKGNLLNVLRTAPFKAVNFCAYDTYRKQLLKIAGNQEATNFERFVAGAAAGITATVLCLPLDTIRTKLVARGGEALGGIGGAFRYMIQTEGLFSLYKGLVPSIASMALSGAVFYGVYDILKSSFLHTPEGRKRLIDMKQQGQELNALDRLELGPIRTLMYGAIAGACTEVATYPFEVVRRQLQMQMGKNKLNALAMGFNIIERGGIPALYAGLLPSLLQVLPSASISYFVYECMKIVLKVE.

Solcar repeat units lie at residues 122–205 (MNTR…YRKQ), 215–300 (ATNF…LKSS), and 329–414 (LGPI…MKIV). Transmembrane regions (helical) follow at residues 127-147 (HLWAGAVAAMVSKTFLAPLER), 180-200 (GNLLNVLRTAPFKAVNFCAYD), 221-241 (FVAGAAAGITATVLCLPLDTI), 276-296 (LVPSIASMALSGAVFYGVYDI), 335-355 (LMYGAIAGACTEVATYPFEVV), and 383-403 (IPALYAGLLPSLLQVLPSASI).

The protein belongs to the mitochondrial carrier (TC 2.A.29) family.

Its subcellular location is the mitochondrion inner membrane. Its function is as follows. Probable mitochondrial adenylate carrier that catalyzes the transport of ATP, ADP and AMP. In Arabidopsis thaliana (Mouse-ear cress), this protein is Probable mitochondrial adenine nucleotide transporter BTL2.